Here is a 102-residue protein sequence, read N- to C-terminus: NADH-quinone oxidoreductase subunit K (102 aa).

The next 3 helical transmembrane spans lie at 5–25 (LAHY…GIFL), 31–51 (IILL…FVAF), and 62–82 (VFVF…LAIL).

Belongs to the complex I subunit 4L family. As to quaternary structure, NDH-1 is composed of 14 different subunits. Subunits NuoA, H, J, K, L, M, N constitute the membrane sector of the complex.

Its subcellular location is the cell inner membrane. The catalysed reaction is a quinone + NADH + 5 H(+)(in) = a quinol + NAD(+) + 4 H(+)(out). In terms of biological role, NDH-1 shuttles electrons from NADH, via FMN and iron-sulfur (Fe-S) centers, to quinones in the respiratory chain. The immediate electron acceptor for the enzyme in this species is believed to be ubiquinone. Couples the redox reaction to proton translocation (for every two electrons transferred, four hydrogen ions are translocated across the cytoplasmic membrane), and thus conserves the redox energy in a proton gradient. The chain is NADH-quinone oxidoreductase subunit K from Bordetella avium (strain 197N).